Here is a 236-residue protein sequence, read N- to C-terminus: Ribonuclease HII (236 aa).

Residues 21–214 (RTVAGVDEVG…LDALPRWQHL (194 aa)) form the RNase H type-2 domain. A divalent metal cation-binding residues include Asp27, Glu28, and Asp119.

The protein belongs to the RNase HII family. Mn(2+) serves as cofactor. The cofactor is Mg(2+).

Its subcellular location is the cytoplasm. The enzyme catalyses Endonucleolytic cleavage to 5'-phosphomonoester.. Endonuclease that specifically degrades the RNA of RNA-DNA hybrids. This is Ribonuclease HII from Streptomyces griseus subsp. griseus (strain JCM 4626 / CBS 651.72 / NBRC 13350 / KCC S-0626 / ISP 5235).